A 326-amino-acid polypeptide reads, in one-letter code: DNA-directed RNA polymerase subunit alpha (326 aa).

An alpha N-terminal domain (alpha-NTD) region spans residues 1–231 (MQTNLLKPKI…DQLVVFAALE (231 aa)). Residues 247–326 (VDPMLMRPVD…ESWPPANLEK (80 aa)) are alpha C-terminal domain (alpha-CTD).

This sequence belongs to the RNA polymerase alpha chain family. Homodimer. The RNAP catalytic core consists of 2 alpha, 1 beta, 1 beta' and 1 omega subunit. When a sigma factor is associated with the core the holoenzyme is formed, which can initiate transcription.

It carries out the reaction RNA(n) + a ribonucleoside 5'-triphosphate = RNA(n+1) + diphosphate. Its function is as follows. DNA-dependent RNA polymerase catalyzes the transcription of DNA into RNA using the four ribonucleoside triphosphates as substrates. The chain is DNA-directed RNA polymerase subunit alpha from Polynucleobacter asymbioticus (strain DSM 18221 / CIP 109841 / QLW-P1DMWA-1) (Polynucleobacter necessarius subsp. asymbioticus).